The following is a 729-amino-acid chain: Leucine-rich repeat flightless-interacting protein 2 (729 aa).

Residues 27-69 (IAREAEARLAAKRAARAEARDIRMRELERQQKELTHRYHDKKW) adopt a coiled-coil conformation. Disordered regions lie at residues 80 to 156 (DHAR…SSSH), 230 to 268 (SARS…ESAA), and 289 to 344 (IPDL…CSLD). Positions 84 to 93 (HLQRSSHRHS) are enriched in basic residues. Residues 99 to 110 (VTPNHRSSSVDV) show a composition bias toward polar residues. Basic and acidic residues predominate over residues 115–126 (RGRESISRRRDS). Low complexity-rich tracts occupy residues 137–147 (RTSNSYSNSYD) and 257–268 (SSDFSDQSESAA). Over residues 304–320 (TTENYSRPSSRNATSGI) the composition is skewed to polar residues. Coiled coils occupy residues 357–531 (DLKD…IGEK) and 574–722 (LDVR…KANR). Residues 600–621 (DDERQKSAKNNSTTTDPTGLEN) form a disordered region. The segment covering 607-616 (AKNNSTTTDP) has biased composition (polar residues).

The protein belongs to the LRRFIP family.

May function as activator of the canonical Wnt signaling pathway upstream of ctnnb1/beta-catenin. Might be required for dorsal axis formation. The chain is Leucine-rich repeat flightless-interacting protein 2 (lrrfip2) from Xenopus laevis (African clawed frog).